The sequence spans 257 residues: tRNA pseudouridine synthase A (257 aa).

Asp-57 acts as the Nucleophile in catalysis. Tyr-115 provides a ligand contact to substrate.

The protein belongs to the tRNA pseudouridine synthase TruA family. Homodimer.

It catalyses the reaction uridine(38/39/40) in tRNA = pseudouridine(38/39/40) in tRNA. Functionally, formation of pseudouridine at positions 38, 39 and 40 in the anticodon stem and loop of transfer RNAs. The chain is tRNA pseudouridine synthase A from Lawsonia intracellularis (strain PHE/MN1-00).